The sequence spans 166 residues: Endoribonuclease YbeY (166 aa).

Residues histidine 132, histidine 136, and histidine 142 each contribute to the Zn(2+) site.

It belongs to the endoribonuclease YbeY family. It depends on Zn(2+) as a cofactor.

The protein localises to the cytoplasm. In terms of biological role, single strand-specific metallo-endoribonuclease involved in late-stage 70S ribosome quality control and in maturation of the 3' terminus of the 16S rRNA. The polypeptide is Endoribonuclease YbeY (Clostridium acetobutylicum (strain ATCC 824 / DSM 792 / JCM 1419 / IAM 19013 / LMG 5710 / NBRC 13948 / NRRL B-527 / VKM B-1787 / 2291 / W)).